The primary structure comprises 737 residues: Polyribonucleotide nucleotidyltransferase (737 aa).

Residues Asp-489 and Asp-495 each contribute to the Mg(2+) site. Residues Pro-556–Ile-615 form the KH domain. The S1 motif domain maps to Asp-625–Lys-693. A disordered region spans residues Ser-691–Glu-737. Residues Pro-700–Pro-714 are compositionally biased toward basic and acidic residues. Over residues His-715–Lys-724 the composition is skewed to basic residues. Over residues Pro-725 to Glu-737 the composition is skewed to basic and acidic residues.

The protein belongs to the polyribonucleotide nucleotidyltransferase family. The cofactor is Mg(2+).

Its subcellular location is the cytoplasm. It catalyses the reaction RNA(n+1) + phosphate = RNA(n) + a ribonucleoside 5'-diphosphate. In terms of biological role, involved in mRNA degradation. Catalyzes the phosphorolysis of single-stranded polyribonucleotides processively in the 3'- to 5'-direction. This is Polyribonucleotide nucleotidyltransferase from Streptococcus pneumoniae (strain JJA).